Reading from the N-terminus, the 324-residue chain is Acetyl-coenzyme A carboxylase carboxyl transferase subunit alpha (324 aa).

Residues 37-291 (ILEDKLENLE…DLMIRKTFEQ (255 aa)) form the CoA carboxyltransferase C-terminal domain.

The protein belongs to the AccA family. In terms of assembly, acetyl-CoA carboxylase is a heterohexamer composed of biotin carboxyl carrier protein (AccB), biotin carboxylase (AccC) and two subunits each of ACCase subunit alpha (AccA) and ACCase subunit beta (AccD).

It localises to the cytoplasm. It carries out the reaction N(6)-carboxybiotinyl-L-lysyl-[protein] + acetyl-CoA = N(6)-biotinyl-L-lysyl-[protein] + malonyl-CoA. It participates in lipid metabolism; malonyl-CoA biosynthesis; malonyl-CoA from acetyl-CoA: step 1/1. Its function is as follows. Component of the acetyl coenzyme A carboxylase (ACC) complex. First, biotin carboxylase catalyzes the carboxylation of biotin on its carrier protein (BCCP) and then the CO(2) group is transferred by the carboxyltransferase to acetyl-CoA to form malonyl-CoA. In Bacillus cereus (strain G9842), this protein is Acetyl-coenzyme A carboxylase carboxyl transferase subunit alpha.